Reading from the N-terminus, the 330-residue chain is Elongation factor Ts (330 aa).

The involved in Mg(2+) ion dislocation from EF-Tu stretch occupies residues 79–82; the sequence is TDFV.

It belongs to the EF-Ts family.

It localises to the cytoplasm. Functionally, associates with the EF-Tu.GDP complex and induces the exchange of GDP to GTP. It remains bound to the aminoacyl-tRNA.EF-Tu.GTP complex up to the GTP hydrolysis stage on the ribosome. The chain is Elongation factor Ts from Bacteroides thetaiotaomicron (strain ATCC 29148 / DSM 2079 / JCM 5827 / CCUG 10774 / NCTC 10582 / VPI-5482 / E50).